The primary structure comprises 616 residues: Sialic acid TRAP transporter permease protein SiaT (616 aa).

The tract at residues 1–190 (MKYINKLEEW…RISNYIKLGS (190 aa)) is TRAP transporter small permease. A run of 17 helical transmembrane segments spans residues 9–29 (EWLGGTLFIAIFGILIAQILS), 36–56 (PLIWSEELAKLLFVYVGMLGI), 83–103 (TNTFVQLLVFVCIFLFIHFGI), 117–137 (GGISEKWIFAALPVIAILMMF), 153–173 (YLPATFFIISAVILFAILFFA), 195–215 (IALLVWLIIMFIGVPVGWSLF), 244–264 (FPLLAVPFYILTGILMNTGGI), 288–308 (IGASLLFSGMSGSALADAGGL), 332–352 (ASCIIGPLVPPSIAMIIYGVI), 357–377 (IAKLFIAGFIPGVLITLALMA), 407–427 (FWAILTPLLIIGGIFSGLFSP), 431–451 (AIVAAAYSIIIGKFVYKELTL), 459–479 (IEAMAITGVVALMIMTVTFFG), 505–525 (VLVMINALLLFLGMFIDALAL), 527–547 (FLVLPMLIPIAMQFNIDLIFF), 552–572 (TLNMMIGILTPPMGMALFVVA), and 587–607 (LPFLIPVFVTLVLITIFPQII). The interval 191 to 616 (SSVYIALLVW…ITFVPNLLIP (426 aa)) is TRAP transporter large permease.

The protein in the N-terminal section; belongs to the TRAP transporter small permease family. This sequence in the C-terminal section; belongs to the TRAP transporter large permease family. As to quaternary structure, the complex comprises the extracytoplasmic solute receptor protein SiaP, and the fused transmembrane protein SiaT.

The protein localises to the cell inner membrane. Functionally, part of the tripartite ATP-independent periplasmic (TRAP) transport system SiaPT involved in the uptake of sialic acid. This Haemophilus influenzae (strain 86-028NP) protein is Sialic acid TRAP transporter permease protein SiaT (siaT).